The following is a 347-amino-acid chain: NADH-ubiquinone oxidoreductase chain 2 (347 aa).

10 helical membrane-spanning segments follow: residues Pro3 to Ser23, His25 to Met45, Tyr59 to Leu79, Ile96 to Pro116, Gly148 to Leu170, Ile178 to Pro198, Met200 to Met220, Ile247 to Ile267, Ile276 to Leu296, and Leu326 to Leu346.

The protein belongs to the complex I subunit 2 family. As to quaternary structure, core subunit of respiratory chain NADH dehydrogenase (Complex I) which is composed of 45 different subunits. Interacts with TMEM242.

It is found in the mitochondrion inner membrane. The enzyme catalyses a ubiquinone + NADH + 5 H(+)(in) = a ubiquinol + NAD(+) + 4 H(+)(out). Core subunit of the mitochondrial membrane respiratory chain NADH dehydrogenase (Complex I) which catalyzes electron transfer from NADH through the respiratory chain, using ubiquinone as an electron acceptor. Essential for the catalytic activity and assembly of complex I. The polypeptide is NADH-ubiquinone oxidoreductase chain 2 (Saccopteryx leptura (Lesser sac-winged bat)).